We begin with the raw amino-acid sequence, 293 residues long: Ribosomal RNA small subunit methyltransferase A (293 aa).

S-adenosyl-L-methionine-binding residues include Asn-29, Leu-31, Gly-56, Glu-77, Asp-102, and Asn-127.

Belongs to the class I-like SAM-binding methyltransferase superfamily. rRNA adenine N(6)-methyltransferase family. RsmA subfamily.

It localises to the cytoplasm. The enzyme catalyses adenosine(1518)/adenosine(1519) in 16S rRNA + 4 S-adenosyl-L-methionine = N(6)-dimethyladenosine(1518)/N(6)-dimethyladenosine(1519) in 16S rRNA + 4 S-adenosyl-L-homocysteine + 4 H(+). In terms of biological role, specifically dimethylates two adjacent adenosines (A1518 and A1519) in the loop of a conserved hairpin near the 3'-end of 16S rRNA in the 30S particle. May play a critical role in biogenesis of 30S subunits. The sequence is that of Ribosomal RNA small subunit methyltransferase A from Geobacillus kaustophilus (strain HTA426).